The following is a 411-amino-acid chain: Methylthioribose-1-phosphate isomerase (411 aa).

At serine 2 the chain carries N-acetylserine. Residue aspartate 280 is the Proton donor of the active site. The residue at position 351 (serine 351) is a Phosphoserine.

It belongs to the eIF-2B alpha/beta/delta subunits family. MtnA subfamily. In terms of assembly, homodimer.

The protein resides in the cytoplasm. It is found in the nucleus. The enzyme catalyses 5-(methylsulfanyl)-alpha-D-ribose 1-phosphate = 5-(methylsulfanyl)-D-ribulose 1-phosphate. Its pathway is amino-acid biosynthesis; L-methionine biosynthesis via salvage pathway; L-methionine from S-methyl-5-thio-alpha-D-ribose 1-phosphate: step 1/6. Its function is as follows. Catalyzes the interconversion of methylthioribose-1-phosphate (MTR-1-P) into methylthioribulose-1-phosphate (MTRu-1-P). The polypeptide is Methylthioribose-1-phosphate isomerase (Saccharomyces cerevisiae (strain RM11-1a) (Baker's yeast)).